A 186-amino-acid chain; its full sequence is Large ribosomal subunit protein uL22 (186 aa).

The tract at residues 161–186 is disordered; the sequence is VDDEPAKKKLSKKKLQRQKEKMLRSE. Basic and acidic residues predominate over residues 177–186; it reads RQKEKMLRSE.

This sequence belongs to the universal ribosomal protein uL22 family.

In Drosophila pseudoobscura pseudoobscura (Fruit fly), this protein is Large ribosomal subunit protein uL22 (RpL17).